Consider the following 305-residue polypeptide: MPITLPATLPAFDVLTHEGVMVMTPERAARQDIRPLRIGLLNLMPKKIQTENQFARLIGATPLQIDFQLIRMTEHQTKNTAAEHMAAFYRPFQEVKHEKFDGLIITGAPIEHLDFSEVTYWDELCEVMDWTQTHVHSTFGVCWGGMAMIYHFHGVPKHMLAAKAFGCFRHRNVAPVSPYLRGFSDDFVIPVSRWTEMRQDEIDAAPGLRTLLASDEVGPCLVEDAGHRALYIFNHFEYDSDTLKQEYDRDIGNGKPINVPRNYYPDDDPTKPPLNRWRSHAHLLYGNWINEIYQSTPYDIQQIGR.

C142 (acyl-thioester intermediate) is an active-site residue. Residues K163 and S192 each coordinate substrate. Residue H235 is the Proton acceptor of the active site. The active site involves E237. R249 serves as a coordination point for substrate.

This sequence belongs to the MetA family.

The protein resides in the cytoplasm. It carries out the reaction L-homoserine + acetyl-CoA = O-acetyl-L-homoserine + CoA. The protein operates within amino-acid biosynthesis; L-methionine biosynthesis via de novo pathway; O-acetyl-L-homoserine from L-homoserine: step 1/1. Functionally, transfers an acetyl group from acetyl-CoA to L-homoserine, forming acetyl-L-homoserine. In Cereibacter sphaeroides (strain ATCC 17025 / ATH 2.4.3) (Rhodobacter sphaeroides), this protein is Homoserine O-acetyltransferase.